The following is a 218-amino-acid chain: OPA3-like protein (218 aa).

Residues 129–179 (NEIMEKQFVLQKKKNELQSSTEEIDSTEKDFDELHKVILKVERELHTLRQN) are a coiled coil. The disordered stretch occupies residues 175–218 (TLRQNTPSQNEQAEATPSKEIPRETVSEKADHPPSSNTKSVSTG). Polar residues predominate over residues 176 to 189 (LRQNTPSQNEQAEA). Basic and acidic residues predominate over residues 194–206 (EIPRETVSEKADH). Polar residues predominate over residues 208-218 (PSSNTKSVSTG).

It belongs to the OPA3 family.

This is OPA3-like protein from Schizosaccharomyces pombe (strain 972 / ATCC 24843) (Fission yeast).